We begin with the raw amino-acid sequence, 281 residues long: Probable endonuclease 4 (281 aa).

Zn(2+)-binding residues include His69, His109, Glu145, Asp179, His182, His216, Asp229, His231, and Glu261.

This sequence belongs to the AP endonuclease 2 family. The cofactor is Zn(2+).

It carries out the reaction Endonucleolytic cleavage to 5'-phosphooligonucleotide end-products.. Endonuclease IV plays a role in DNA repair. It cleaves phosphodiester bonds at apurinic or apyrimidinic (AP) sites, generating a 3'-hydroxyl group and a 5'-terminal sugar phosphate. This chain is Probable endonuclease 4, found in Nautilia profundicola (strain ATCC BAA-1463 / DSM 18972 / AmH).